Here is a 425-residue protein sequence, read N- to C-terminus: Serine--tRNA ligase (425 aa).

229-231 is a binding site for L-serine; the sequence is TSE. ATP-binding positions include 259–261 and V275; that span reads RKE. E282 contacts L-serine. 349 to 352 provides a ligand contact to ATP; the sequence is EVTS. T384 contacts L-serine.

It belongs to the class-II aminoacyl-tRNA synthetase family. Type-1 seryl-tRNA synthetase subfamily. As to quaternary structure, homodimer. The tRNA molecule binds across the dimer.

It is found in the cytoplasm. The enzyme catalyses tRNA(Ser) + L-serine + ATP = L-seryl-tRNA(Ser) + AMP + diphosphate + H(+). It catalyses the reaction tRNA(Sec) + L-serine + ATP = L-seryl-tRNA(Sec) + AMP + diphosphate + H(+). Its pathway is aminoacyl-tRNA biosynthesis; selenocysteinyl-tRNA(Sec) biosynthesis; L-seryl-tRNA(Sec) from L-serine and tRNA(Sec): step 1/1. Its function is as follows. Catalyzes the attachment of serine to tRNA(Ser). Is also able to aminoacylate tRNA(Sec) with serine, to form the misacylated tRNA L-seryl-tRNA(Sec), which will be further converted into selenocysteinyl-tRNA(Sec). The polypeptide is Serine--tRNA ligase (Borreliella burgdorferi (strain ATCC 35210 / DSM 4680 / CIP 102532 / B31) (Borrelia burgdorferi)).